Here is a 236-residue protein sequence, read N- to C-terminus: 15,16-dihydrobiliverdin:ferredoxin oxidoreductase (236 aa).

It belongs to the HY2 family.

It catalyses the reaction 15,16-dihydrobiliverdin + oxidized 2[4Fe-4S]-[ferredoxin] = biliverdin IXalpha + reduced 2[4Fe-4S]-[ferredoxin] + 2 H(+). In terms of biological role, catalyzes the two-electron reduction of biliverdin IX-alpha at the C15 methine bridge. In Synechococcus sp. (strain WH8020), this protein is 15,16-dihydrobiliverdin:ferredoxin oxidoreductase (pebA).